The following is a 957-amino-acid chain: MTQTLSQLENSGAFIERHIGPDAAQQQEMLNAVGAQSLNALTGQIVPKDIQLATPPQVGAPATEYAALAELKAIASRNKRFTSYIGMGYTAVQLPPVILRNMLENPGWYTAYTPYQPEVSQGRLEALLNFQQVTLDLTGLDMASASLLDEATAAAEAMAMAKRVSKLKNANRFFVASDVHPQTLDVVRTRAETFGFEVIVDDAQKVLDHQDVFGVLLQQVGTTGEIHDYTALISELKSRKIVVSVAADIMALVLLTAPGKQGADIVFGSAQRFGVPMGYGGPHAAFFAAKDEYKRSMPGRIIGVSKDAAGNTALRMAMQTREQHIRREKANSNICTSQVLLANIASLYAVYHGPVGLKRIANRIHRLTDILAAGLQQKGLKLRHAHYFDTLCVEVADKAGVLTRAEAAEINLRSDILNAVGITLDETTTRENVMQLFNVLLGDNHGLDIDTLDKDVAHDSRSIQPAMLRDDEILTHPVFNRYHSETEMMRYMHSLERKDLALNQAMIPLGSCTMKLNAAAEMIPITWPEFAELHPFCPPEQAEGYQQMIAQLADWLVKLTGYDAVCMQPNSGAQGEYAGLLAIRHYHESRNEGHRDICLIPASAHGTNPASAHMAGMQVVVVACDKNGNIDLTDLRAKAEQAGDNLSCIMVTYPSTHGVYEETIREVCEVVHQFGGQVYLDGANMNAQVGITSPGFIGADVSHLNLHKTFCIPHGGGGPGMGPIGVKAHLAPFVPGHSVVQIEGMLTRQGAVSAAPFGSASILPISWMYIRMMGAEGLKKASQVAILNANYIASRLQDAFPVLYTGRDGRVAHECILDIRPLKEETGISELDIAKRLIDYGFHAPTMSFPVAGTLMVEPTESESKVELDRFIDAMLAIRAEIDQVKAGVWPLEDNPLVNAPHIQSELVAEWAHPYSREVAVFPAGVADKYWPTVKRLDDVYGDRNLFCSCVPISEYQ.

K708 bears the N6-(pyridoxal phosphate)lysine mark.

It belongs to the GcvP family. As to quaternary structure, the glycine cleavage system is composed of four proteins: P, T, L and H. Pyridoxal 5'-phosphate serves as cofactor.

It catalyses the reaction N(6)-[(R)-lipoyl]-L-lysyl-[glycine-cleavage complex H protein] + glycine + H(+) = N(6)-[(R)-S(8)-aminomethyldihydrolipoyl]-L-lysyl-[glycine-cleavage complex H protein] + CO2. In terms of biological role, the glycine cleavage system catalyzes the degradation of glycine. The P protein binds the alpha-amino group of glycine through its pyridoxal phosphate cofactor; CO(2) is released and the remaining methylamine moiety is then transferred to the lipoamide cofactor of the H protein. The sequence is that of Glycine dehydrogenase (decarboxylating) from Escherichia coli (strain K12 / MC4100 / BW2952).